A 229-amino-acid polypeptide reads, in one-letter code: Transcriptional regulatory protein CreB (229 aa).

A Response regulatory domain is found at 5–119 (TVWLVEDEQG…EVCARVRTLL (115 aa)). 4-aspartylphosphate is present on Asp-54. Residues 129 to 228 (SPVIRIGHFE…HRGMGYSLRG (100 aa)) constitute a DNA-binding region (ompR/PhoB-type).

In terms of processing, phosphorylated by CreC.

It is found in the cytoplasm. Its function is as follows. Member of the two-component regulatory system CreC/CreB involved in catabolic regulation. This chain is Transcriptional regulatory protein CreB (creB), found in Escherichia coli (strain K12).